The following is a 91-amino-acid chain: RNA-binding protein Hfq (91 aa).

One can recognise a Sm domain in the interval 9–68 (DPFLNALRRERVPVSVYLVNGIKLQGTIESFDQFVVLLRNTVSQMVYKHAISTVVPARNV).

The protein belongs to the Hfq family. Homohexamer.

RNA chaperone that binds small regulatory RNA (sRNAs) and mRNAs to facilitate mRNA translational regulation in response to envelope stress, environmental stress and changes in metabolite concentrations. Also binds with high specificity to tRNAs. This Stenotrophomonas maltophilia (strain K279a) protein is RNA-binding protein Hfq.